Reading from the N-terminus, the 20-residue chain is WLSGVDKIRGVNLGSAFIIE.

Belongs to the glycosyl hydrolase 5 (cellulase A) family.

Its subcellular location is the secreted. It is found in the extracellular space. It catalyses the reaction Random hydrolysis of (1-&gt;6)-linkages in (1-&gt;6)-beta-D-glucans.. Endo-1,6-beta-glucanase that has highest activity against the beta-1,6-glucan pustulan. Also active against the beta-1,6-glucan lutean. Lower activity against laminarin (beta-1,3-glucan with beta-1,6-branches). Little or no activity against gentiobiose, yeast glucan, lichenin, scleroglucan, curdlan, barley glucan, CM cellulose, HE cellulose, pachyman and pullulan. The polypeptide is Endo-1,6-beta-glucanase (Acremonium sp).